The chain runs to 202 residues: Holliday junction branch migration complex subunit RuvA (202 aa).

Residues 1 to 62 (MIGYLRGRLH…EDAMELYGFT (62 aa)) form a domain I region. The domain II stretch occupies residues 63–141 (RPEELHLFTL…KSGLVDGTET (79 aa)). The segment at 141–145 (TEAIP) is flexible linker. A domain III region spans residues 146–202 (AGGGDNDEALAALLALGYSREEIGPILARVRQELGNAAPTTAVLQAVLKTFGRGGGD).

Belongs to the RuvA family. In terms of assembly, homotetramer. Forms an RuvA(8)-RuvB(12)-Holliday junction (HJ) complex. HJ DNA is sandwiched between 2 RuvA tetramers; dsDNA enters through RuvA and exits via RuvB. An RuvB hexamer assembles on each DNA strand where it exits the tetramer. Each RuvB hexamer is contacted by two RuvA subunits (via domain III) on 2 adjacent RuvB subunits; this complex drives branch migration. In the full resolvosome a probable DNA-RuvA(4)-RuvB(12)-RuvC(2) complex forms which resolves the HJ.

Its subcellular location is the cytoplasm. Functionally, the RuvA-RuvB-RuvC complex processes Holliday junction (HJ) DNA during genetic recombination and DNA repair, while the RuvA-RuvB complex plays an important role in the rescue of blocked DNA replication forks via replication fork reversal (RFR). RuvA specifically binds to HJ cruciform DNA, conferring on it an open structure. The RuvB hexamer acts as an ATP-dependent pump, pulling dsDNA into and through the RuvAB complex. HJ branch migration allows RuvC to scan DNA until it finds its consensus sequence, where it cleaves and resolves the cruciform DNA. This Moorella thermoacetica (strain ATCC 39073 / JCM 9320) protein is Holliday junction branch migration complex subunit RuvA.